The chain runs to 257 residues: Acetyl-coenzyme A carboxylase carboxyl transferase subunit beta 1 (257 aa).

Positions 1 to 257 (MNINDIFLKR…KMHVNTGGEA (257 aa)) constitute a CoA carboxyltransferase N-terminal domain.

This sequence belongs to the AccD/PCCB family. In terms of assembly, acetyl-CoA carboxylase is a heterohexamer composed of biotin carboxyl carrier protein (AccB), biotin carboxylase (AccC) and two subunits each of ACCase subunit alpha (AccA) and ACCase subunit beta (AccD).

Its subcellular location is the cytoplasm. The enzyme catalyses N(6)-carboxybiotinyl-L-lysyl-[protein] + acetyl-CoA = N(6)-biotinyl-L-lysyl-[protein] + malonyl-CoA. It functions in the pathway lipid metabolism; malonyl-CoA biosynthesis; malonyl-CoA from acetyl-CoA: step 1/1. Component of the acetyl coenzyme A carboxylase (ACC) complex. Biotin carboxylase (BC) catalyzes the carboxylation of biotin on its carrier protein (BCCP) and then the CO(2) group is transferred by the transcarboxylase to acetyl-CoA to form malonyl-CoA. The chain is Acetyl-coenzyme A carboxylase carboxyl transferase subunit beta 1 from Lachnospira eligens (strain ATCC 27750 / DSM 3376 / VPI C15-48 / C15-B4) (Eubacterium eligens).